The primary structure comprises 412 residues: Serine hydroxymethyltransferase (412 aa).

Residues Leu117 and 121–123 (GHL) each bind (6S)-5,6,7,8-tetrahydrofolate. Position 226 is an N6-(pyridoxal phosphate)lysine (Lys226). Residue 349 to 351 (SPF) coordinates (6S)-5,6,7,8-tetrahydrofolate.

This sequence belongs to the SHMT family. Homodimer. It depends on pyridoxal 5'-phosphate as a cofactor.

The protein localises to the cytoplasm. The enzyme catalyses (6R)-5,10-methylene-5,6,7,8-tetrahydrofolate + glycine + H2O = (6S)-5,6,7,8-tetrahydrofolate + L-serine. It functions in the pathway one-carbon metabolism; tetrahydrofolate interconversion. It participates in amino-acid biosynthesis; glycine biosynthesis; glycine from L-serine: step 1/1. Functionally, catalyzes the reversible interconversion of serine and glycine with tetrahydrofolate (THF) serving as the one-carbon carrier. This reaction serves as the major source of one-carbon groups required for the biosynthesis of purines, thymidylate, methionine, and other important biomolecules. Also exhibits THF-independent aldolase activity toward beta-hydroxyamino acids, producing glycine and aldehydes, via a retro-aldol mechanism. This Nitratidesulfovibrio vulgaris (strain ATCC 29579 / DSM 644 / CCUG 34227 / NCIMB 8303 / VKM B-1760 / Hildenborough) (Desulfovibrio vulgaris) protein is Serine hydroxymethyltransferase.